The following is a 227-amino-acid chain: MDTARVYFGLKPPRTPGAWHESPPSLPPDACRCPRSHRLALKLSCAGLILLVVTLIGMSVLVRVLIQKPSIEKCYVLIQENLNKTTDCSAKLECPQDWLSHRDKCFHVSHVSNTWEEGLVDCDGKGATLMLIQDQEELRFLLDSIKEKYNSFWIGLRYTLPDMNWKWINGSTLNSDVLKITDDTENDSCAAISGDKVTFESCNSDNRWICQKELYHETLSNYVGYGH.

Residues 1–45 (MDTARVYFGLKPPRTPGAWHESPPSLPPDACRCPRSHRLALKLSC) are Cytoplasmic-facing. The short motif at 31–34 (CRCP) is the LCK-binding motif element. A helical; Signal-anchor for type II membrane protein membrane pass occupies residues 46-66 (AGLILLVVTLIGMSVLVRVLI). The Extracellular segment spans residues 67–227 (QKPSIEKCYV…TLSNYVGYGH (161 aa)). The C-type lectin domain maps to 93 to 212 (ECPQDWLSHR…NSDNRWICQK (120 aa)). 3 disulfide bridges follow: C94–C105, C122–C210, and C189–C202.

Homodimer; disulfide-linked. Interacts with tyrosine kinase LCK. In terms of tissue distribution, expressed in natural killer cells.

The protein resides in the membrane. In terms of biological role, plays a stimulatory role on natural killer (NK) cell cytotoxicity. This chain is Killer cell lectin-like receptor subfamily B member 1A (Klrb1a), found in Mus musculus (Mouse).